Reading from the N-terminus, the 115-residue chain is Cholecystokinin (115 aa).

Residues 1-20 (MNSGVCLCVLMAVLAAGALT) form the signal peptide. Residues 21–44 (QPVPPADPAGSGLQRAEEAPRRQL) constitute a propeptide that is removed on maturation. The disordered stretch occupies residues 23-52 (VPPADPAGSGLQRAEEAPRRQLRVSQRTDG). O-linked (Xyl...) (chondroitin sulfate) serine glycosylation is present at Ser-31. The residue at position 97 (Tyr-97) is a Sulfotyrosine. Phe-103 bears the Phenylalanine amide mark. The propeptide occupies 107 to 115 (SAEEYEYPS). Residues Tyr-111 and Tyr-113 each carry the sulfotyrosine modification.

It belongs to the gastrin/cholecystokinin family. As to quaternary structure, binds to CCK-A receptors in the pancreas and CCK-B receptors in the brain. In terms of processing, the precursor is cleaved by proteases to produce a number of active cholecystokinins. Post-translationally, the precursor is cleaved by ACE, which removes the Gly-Arg-Arg peptide at the C-terminus, leading to mature hormone. As to expression, detected in cerebrospinal fluid and urine (at protein level).

It is found in the secreted. This peptide hormone induces gall bladder contraction and the release of pancreatic enzymes in the gut. Its function in the brain is not clear. Binding to CCK-A receptors stimulates amylase release from the pancreas, binding to CCK-B receptors stimulates gastric acid secretion. In Homo sapiens (Human), this protein is Cholecystokinin (CCK).